Consider the following 78-residue polypeptide: Large ribosomal subunit protein bL28 (78 aa).

This sequence belongs to the bacterial ribosomal protein bL28 family.

This chain is Large ribosomal subunit protein bL28, found in Synechococcus sp. (strain CC9605).